Reading from the N-terminus, the 274-residue chain is Protein CIMAP1C (274 aa).

The interval 1-27 (MKLPKGTRSSVYFAQHPEKEPLPSRQE) is disordered. Over residues 16 to 27 (HPEKEPLPSRQE) the composition is skewed to basic and acidic residues. STPGR repeat units follow at residues 199–224 (PGPT…MAKR) and 235–260 (PGPG…MGIK).

It belongs to the CIMAP family.

This Homo sapiens (Human) protein is Protein CIMAP1C.